Reading from the N-terminus, the 499-residue chain is Cytochrome P450 81E8 (499 aa).

A helical transmembrane segment spans residues 3-23 (TFYLSLIISLFFLIITLKVFF). Cysteine 436 contributes to the heme binding site.

The protein belongs to the cytochrome P450 family. The cofactor is heme.

The protein localises to the membrane. Probable monooxygenases exhibiting no activity with isoflavones such as formononetin, biochanin A, pseudobaptigenin, daidzein, genistein, isoformononetin and prunetin, or with flavonoids including naringenin, liquiritigenin, apigenin, luteolin, or kaempferol. In Medicago truncatula (Barrel medic), this protein is Cytochrome P450 81E8.